Here is a 500-residue protein sequence, read N- to C-terminus: MVSQTATPTATAASEPIVDVEMESAEDAETAKKDAELLAVQEIRDHARQIDKAVVSKEPRFILRVLRSLPTTRRKLALVVVGSLAVQLYPAGPERDGNQWAYIEDYPAGAQEPEGLHDPGSDKSPFAQEVDAYFHLLLLVRLLDKNDLPKATKCSQDLMAKIVGQNRRSLDLIAAKCYFYHSRVSELNNDLESIRSFLHSRLRTATLRNDFEGQAVLINCLLRNYLHYSLYDQADKLVNKSVFPETASNNECARFLYYLGRIKAAKLEYSVAHKQLVQALRKAPQQAAVGFRQTVQKLVIVVELLLGDIPERKVFRQAALRRSLGPYFQLTQAVRMGNLQRFGEVLENFGEQFRQDHTFTLIIRLRHNVIKTAIRSIGLAYSRISPQDIARKLGLDSPEDAEFIVAKAIRDGVIDATLDPEKGYMRTKESTDIYSTREPQLAFHQRISFCLDLHNQSVKAMRYPPKSYGKELESAEERREREQQDLELAKEMAEEDDDDF.

A PCI domain is found at 253–432; sequence ARFLYYLGRI…GYMRTKESTD (180 aa). A disordered region spans residues 462-484; it reads RYPPKSYGKELESAEERREREQQ. Positions 468–484 are enriched in basic and acidic residues; that stretch reads YGKELESAEERREREQQ.

It belongs to the proteasome subunit S3 family. The 26S proteasome is composed of a core protease, known as the 20S proteasome, capped at one or both ends by the 19S regulatory complex (RC). The RC is composed of at least 18 different subunits in two subcomplexes, the base and the lid, which form the portions proximal and distal to the 20S proteolytic core, respectively.

In terms of biological role, acts as a regulatory subunit of the 26 proteasome which is involved in the ATP-dependent degradation of ubiquitinated proteins. The polypeptide is Probable 26S proteasome non-ATPase regulatory subunit 3 (DOXA2) (Anopheles stephensi (Indo-Pakistan malaria mosquito)).